Consider the following 393-residue polypeptide: Methylthioribose kinase (393 aa).

Residues asparagine 38, lysine 53, and 107 to 109 (EDL) contribute to the ATP site. Aspartate 225 contacts substrate. An ATP-binding site is contributed by 242–244 (DPE). Residue arginine 332 participates in substrate binding.

This sequence belongs to the methylthioribose kinase family. Homodimer.

The enzyme catalyses 5-(methylsulfanyl)-D-ribose + ATP = 5-(methylsulfanyl)-alpha-D-ribose 1-phosphate + ADP + H(+). The protein operates within amino-acid biosynthesis; L-methionine biosynthesis via salvage pathway; S-methyl-5-thio-alpha-D-ribose 1-phosphate from S-methyl-5'-thioadenosine (hydrolase route): step 2/2. Catalyzes the phosphorylation of methylthioribose into methylthioribose-1-phosphate. The chain is Methylthioribose kinase from Bacillus cereus (strain ATCC 10987 / NRS 248).